The primary structure comprises 105 residues: Thioredoxin (105 aa).

In terms of domain architecture, Thioredoxin spans 1 to 105 (MANNVMDSSF…SLLDWINKSI (105 aa)). Cysteines 30 and 33 form a disulfide.

This sequence belongs to the thioredoxin family.

Component of the thioredoxin-thioredoxin reductase system. Participates in various redox reactions through the reversible oxidation of its active center dithiol to a disulfide and catalyzes dithiol-disulfide exchange reactions. The chain is Thioredoxin (trxA) from Rickettsia conorii (strain ATCC VR-613 / Malish 7).